A 429-amino-acid chain; its full sequence is UPF0761 membrane protein ABO_1543 (429 aa).

A run of 6 helical transmembrane segments spans residues 45 to 65 (LFAI…VPAL), 102 to 122 (LTVL…STVE), 141 to 161 (LLMY…GLAI), 184 to 204 (WLAV…YTVV), 216 to 236 (LGAA…TFFI), and 256 to 278 (LLWI…ALVV).

It belongs to the UPF0761 family.

It localises to the cell inner membrane. In Alcanivorax borkumensis (strain ATCC 700651 / DSM 11573 / NCIMB 13689 / SK2), this protein is UPF0761 membrane protein ABO_1543.